Here is a 493-residue protein sequence, read N- to C-terminus: Cytochrome P450 monooxygenase esdpG (493 aa).

The chain crosses the membrane as a helical span at residues 10-30; it reads VLGVTWLSALFTLGSLSVFWL. Cys-434 serves as a coordination point for heme.

Belongs to the cytochrome P450 family. Heme is required as a cofactor.

The protein resides in the membrane. The protein operates within secondary metabolite biosynthesis; terpenoid biosynthesis. Cytochrome P450 monooxygenasee; part of the cluster that mediates the biosynthesis of shearones, diterpenoid pyrones (DPs) which are structurally diverse meroterpenoids consisting of a diterpene linked by a pyrone, and which may exhibit a range of bioactivities. Whitin the pathway, esdpG takes part in the molecular scaffold modification via the hydroxylation at C-11 and C-12 and can transform shearone A into shearone C and shearone B into shearone D. The molecular scaffold is commonly biosynthesized by a series of enzymes including the non-reducing polyketide synthase (NR-PKS) esdpA that generates an alpha-pyrone; the prenyltransferase esdpC that attaches a geranylgeranyl pyrophosphate (GGPP) produced by the GGPP synthase (GGPPS) esdpD onto the pyrone unit; the FAD-dependent monooxygenase esdpE that converts an olefin on the diterpene unit into an epoxide; and the terpene cyclase esdpB that catalyzes the cyclization reactions to give the molecular backbone shearone A. In the modification steps, esdpF oxidizes the hydroxy group to a ketone at C-3 and esdpG then attaches hydroxy groups at both C-11 and C-12. After that, esdpI hydroxylates at C-20 and esdpH hydroxylates at C-6'. The ether bridge is generated by nucleophilic attack of the hydroxy group at C-20 to the carbonyl carbon at C-3. EsdpH can also functions prior to esdpI. The different combinations of these modification enzymes lead to the production of diverse shearone derivatives, shearone I being the end product of the pathway. The alpha-ketoglutarate-dependent dioxygenase esdpJ seems not to be involved in this pathway. The sequence is that of Cytochrome P450 monooxygenase esdpG from Penicillium shearii (Eupenicillium shearii).